Reading from the N-terminus, the 247-residue chain is Segregation and condensation protein A (247 aa).

It belongs to the ScpA family. Component of a cohesin-like complex composed of ScpA, ScpB and the Smc homodimer, in which ScpA and ScpB bind to the head domain of Smc. The presence of the three proteins is required for the association of the complex with DNA.

The protein localises to the cytoplasm. Participates in chromosomal partition during cell division. May act via the formation of a condensin-like complex containing Smc and ScpB that pull DNA away from mid-cell into both cell halves. The polypeptide is Segregation and condensation protein A (Bacillus cereus (strain ATCC 10987 / NRS 248)).